The chain runs to 376 residues: Protein-arginine rhamnosyltransferase (376 aa).

DTDP-beta-L-rhamnose-binding positions include 13 to 16, Tyr-192, 252 to 254, and 270 to 274; these read NYGD, MAQ, and RGEDS. A dTDP-binding site is contributed by 14 to 15; that stretch reads YG. The active-site Proton acceptor is the Asp-16. DTDP is bound by residues Tyr-192, 252 to 254, and 270 to 274; these read MAQ and RGEDS. Glu-272 is an active-site residue.

Belongs to the glycosyltransferase 104 family.

The catalysed reaction is dTDP-beta-L-rhamnose + L-arginyl-[protein] = N(omega)-(alpha-L-rhamnosyl)-L-arginyl-[protein] + dTDP + H(+). Protein-arginine rhamnosyltransferase that catalyzes the transfer of a single rhamnose to elongation factor P (EF-P) on 'Lys-32', a modification required for EF-P-dependent rescue of polyproline stalled ribosomes. The polypeptide is Protein-arginine rhamnosyltransferase (Pseudomonas aeruginosa (strain ATCC 15692 / DSM 22644 / CIP 104116 / JCM 14847 / LMG 12228 / 1C / PRS 101 / PAO1)).